A 794-amino-acid polypeptide reads, in one-letter code: Inactive zinc metalloprotease C354.09c (794 aa).

Residues 1-56 (MTDEKHVYVPPPKDPPSYEEVALHSALNNSAPPNDGEQNETSMEEMEIIEPPSEDS) are disordered. The helical transmembrane segment at 91-111 (IPFQFLYLAVIATVIILASYY) threads the bilayer.

This sequence belongs to the peptidase M28 family. M28B subfamily.

It is found in the membrane. This chain is Inactive zinc metalloprotease C354.09c, found in Schizosaccharomyces pombe (strain 972 / ATCC 24843) (Fission yeast).